Consider the following 289-residue polypeptide: Splicing factor C9orf78 homolog (289 aa).

Positions 1-12 are enriched in basic residues; it reads MPVVRKIFRRRR. Disordered stretches follow at residues 1–27 and 86–109; these read MPVV…SEEV and GKDK…TNRR. Residues 5–58 form an interaction with SNRNP200 region; that stretch reads RKIFRRRRGDSESEEDEQDSEEVRLKLEETREVQNLRKRPNGVSAVALLVGEKV. A phosphoserine mark is found at Ser-15 and Ser-17. Tyr-147 is subject to Phosphotyrosine. The segment covering 232–283 has biased composition (basic and acidic residues); that stretch reads LNAPIRRNKEEPKARPLRVGDTEKPEPERSPPNRKRPANEKATDDYHYEKFK. The disordered stretch occupies residues 232–289; sequence LNAPIRRNKEEPKARPLRVGDTEKPEPERSPPNRKRPANEKATDDYHYEKFKKMNRRY. Phosphothreonine is present on Thr-253. Ser-261 is modified (phosphoserine).

Belongs to the TLS1 family. In terms of assembly, component of the spliceosome. Interacts with SNRNP200; the interaction is direct. Interacts with PRPF8.

It is found in the nucleus. The protein localises to the chromosome. Its subcellular location is the centromere. Functionally, plays a role in pre-mRNA splicing by promoting usage of the upstream 3'-splice site at alternative NAGNAG splice sites; these are sites featuring alternative acceptor motifs separated by only a few nucleotides. May also modulate exon inclusion events. Plays a role in spliceosomal remodeling by displacing WBP4 from SNRNP200 and may act to inhibit SNRNP200 helicase activity. Binds U5 snRNA. Required for proper chromosome segregation. Not required for splicing of shelterin components. The protein is Splicing factor C9orf78 homolog of Pongo abelii (Sumatran orangutan).